A 1342-amino-acid chain; its full sequence is DNA-directed RNA polymerase subunit beta (1342 aa).

The protein belongs to the RNA polymerase beta chain family. The RNAP catalytic core consists of 2 alpha, 1 beta, 1 beta' and 1 omega subunit. When a sigma factor is associated with the core the holoenzyme is formed, which can initiate transcription.

The enzyme catalyses RNA(n) + a ribonucleoside 5'-triphosphate = RNA(n+1) + diphosphate. Functionally, DNA-dependent RNA polymerase catalyzes the transcription of DNA into RNA using the four ribonucleoside triphosphates as substrates. This chain is DNA-directed RNA polymerase subunit beta, found in Colwellia psychrerythraea (strain 34H / ATCC BAA-681) (Vibrio psychroerythus).